Consider the following 418-residue polypeptide: CinA-like protein (418 aa).

Belongs to the CinA family.

This is CinA-like protein from Cytophaga hutchinsonii (strain ATCC 33406 / DSM 1761 / CIP 103989 / NBRC 15051 / NCIMB 9469 / D465).